The chain runs to 236 residues: uncharacterized protein (236 aa).

Positions 1–29 are disordered; it reads MNNEKNKQDRENLNRQDERKSSEIKSERK.

This is an uncharacterized protein from Staphylococcus aureus.